Here is a 394-residue protein sequence, read N- to C-terminus: Elongation factor Tu (394 aa).

The tr-type G domain maps to 10 to 204 (KPHINIGTIG…AVDDNIPTPE (195 aa)). The interval 19-26 (GHVDHGKT) is G1. 19-26 (GHVDHGKT) lines the GTP pocket. Thr26 is a Mg(2+) binding site. Residues 60–64 (GITIN) are G2. Residues 81-84 (DCPG) are G3. Residues 81–85 (DCPGH) and 136–139 (NKID) each bind GTP. The interval 136–139 (NKID) is G4. The segment at 174-176 (SAL) is G5.

It belongs to the TRAFAC class translation factor GTPase superfamily. Classic translation factor GTPase family. EF-Tu/EF-1A subfamily. As to quaternary structure, monomer.

The protein localises to the cytoplasm. It carries out the reaction GTP + H2O = GDP + phosphate + H(+). Functionally, GTP hydrolase that promotes the GTP-dependent binding of aminoacyl-tRNA to the A-site of ribosomes during protein biosynthesis. This Chlamydia abortus (strain DSM 27085 / S26/3) (Chlamydophila abortus) protein is Elongation factor Tu.